The following is a 101-amino-acid chain: Large ribosomal subunit protein eL43 (101 aa).

The segment at 40 to 62 (CPSCRSLVRLQRIAFGIWKCPKC) adopts a C4-type zinc-finger fold.

This sequence belongs to the eukaryotic ribosomal protein eL43 family. Zn(2+) is required as a cofactor.

The polypeptide is Large ribosomal subunit protein eL43 (Pyrobaculum neutrophilum (strain DSM 2338 / JCM 9278 / NBRC 100436 / V24Sta) (Thermoproteus neutrophilus)).